Reading from the N-terminus, the 358-residue chain is Aminomethyltransferase (358 aa).

Belongs to the GcvT family. In terms of assembly, the glycine cleavage system is composed of four proteins: P, T, L and H.

It catalyses the reaction N(6)-[(R)-S(8)-aminomethyldihydrolipoyl]-L-lysyl-[protein] + (6S)-5,6,7,8-tetrahydrofolate = N(6)-[(R)-dihydrolipoyl]-L-lysyl-[protein] + (6R)-5,10-methylene-5,6,7,8-tetrahydrofolate + NH4(+). The glycine cleavage system catalyzes the degradation of glycine. The polypeptide is Aminomethyltransferase (Francisella tularensis subsp. mediasiatica (strain FSC147)).